The chain runs to 255 residues: Imidazole glycerol phosphate synthase subunit HisF (255 aa).

Residues Asp-11 and Asp-130 contribute to the active site.

It belongs to the HisA/HisF family. In terms of assembly, heterodimer of HisH and HisF.

It is found in the cytoplasm. The catalysed reaction is 5-[(5-phospho-1-deoxy-D-ribulos-1-ylimino)methylamino]-1-(5-phospho-beta-D-ribosyl)imidazole-4-carboxamide + L-glutamine = D-erythro-1-(imidazol-4-yl)glycerol 3-phosphate + 5-amino-1-(5-phospho-beta-D-ribosyl)imidazole-4-carboxamide + L-glutamate + H(+). It functions in the pathway amino-acid biosynthesis; L-histidine biosynthesis; L-histidine from 5-phospho-alpha-D-ribose 1-diphosphate: step 5/9. In terms of biological role, IGPS catalyzes the conversion of PRFAR and glutamine to IGP, AICAR and glutamate. The HisF subunit catalyzes the cyclization activity that produces IGP and AICAR from PRFAR using the ammonia provided by the HisH subunit. This is Imidazole glycerol phosphate synthase subunit HisF from Campylobacter jejuni subsp. jejuni serotype O:6 (strain 81116 / NCTC 11828).